Consider the following 112-residue polypeptide: ATP synthase subunit c (112 aa).

The next 2 helical transmembrane spans lie at 36 to 56 (FSVLAAGLGLGVAALGGAIGM) and 81 to 101 (MFIALAMIEAQVIYALVIALI).

The protein belongs to the ATPase C chain family. As to quaternary structure, F-type ATPases have 2 components, F(1) - the catalytic core - and F(0) - the membrane proton channel. F(1) has five subunits: alpha(3), beta(3), gamma(1), delta(1), epsilon(1). F(0) has three main subunits: a(1), b(2) and c(10-14). The alpha and beta chains form an alternating ring which encloses part of the gamma chain. F(1) is attached to F(0) by a central stalk formed by the gamma and epsilon chains, while a peripheral stalk is formed by the delta and b chains.

It is found in the cell inner membrane. Functionally, f(1)F(0) ATP synthase produces ATP from ADP in the presence of a proton or sodium gradient. F-type ATPases consist of two structural domains, F(1) containing the extramembraneous catalytic core and F(0) containing the membrane proton channel, linked together by a central stalk and a peripheral stalk. During catalysis, ATP synthesis in the catalytic domain of F(1) is coupled via a rotary mechanism of the central stalk subunits to proton translocation. Key component of the F(0) channel; it plays a direct role in translocation across the membrane. A homomeric c-ring of between 10-14 subunits forms the central stalk rotor element with the F(1) delta and epsilon subunits. The sequence is that of ATP synthase subunit c from Campylobacter jejuni (strain RM1221).